The sequence spans 31 residues: Cytochrome b6-f complex subunit 6 (31 aa).

The chain crosses the membrane as a helical span at residues 7–25 (YSGFLLAAPIPASAPFTGL).

This sequence belongs to the PetL family. The 4 large subunits of the cytochrome b6-f complex are cytochrome b6, subunit IV (17 kDa polypeptide, PetD), cytochrome f and the Rieske protein, while the 4 small subunits are PetG, PetL, PetM and PetN. The complex functions as a dimer.

The protein localises to the plastid. It is found in the chloroplast thylakoid membrane. Component of the cytochrome b6-f complex, which mediates electron transfer between photosystem II (PSII) and photosystem I (PSI), cyclic electron flow around PSI, and state transitions. PetL is important for photoautotrophic growth as well as for electron transfer efficiency and stability of the cytochrome b6-f complex. This is Cytochrome b6-f complex subunit 6 from Huperzia lucidula (Shining clubmoss).